Reading from the N-terminus, the 704-residue chain is Ubiquitin-like modifier-activating enzyme atg7 (704 aa).

The GXGXXG motif signature appears at G372 to G377. The Glycyl thioester intermediate role is filled by C555. Residues A660 to E699 are homodimerization. The segment at A682 to L704 is disordered. Residues V687–L704 are compositionally biased toward acidic residues.

Belongs to the ATG7 family. Homodimer. Interacts with ATG8 through a thioester bond between Cys-555 and the C-terminal Gly of ATG8 and with ATG12 through a thioester bond between Cys-555 and the C-terminal Gly of ATG12. Also interacts with ATG3.

Its subcellular location is the cytoplasm. It is found in the preautophagosomal structure. Its function is as follows. E1-like activating enzyme involved in the 2 ubiquitin-like systems required for cytoplasm to vacuole transport (Cvt) and autophagy. Activates ATG12 for its conjugation with ATG5 and ATG8 for its conjugation with phosphatidylethanolamine. Both systems are needed for the ATG8 association to Cvt vesicles and autophagosomes membranes. Autophagy is essential for maintenance of amino acid levels and protein synthesis under nitrogen starvation. Required for selective autophagic degradation of the nucleus (nucleophagy) as well as for mitophagy which contributes to regulate mitochondrial quantity and quality by eliminating the mitochondria to a basal level to fulfill cellular energy requirements and preventing excess ROS production. Required for normal mycelial growth and conidiogenesis, and regulates sclerotial formation. Plays an essential role in pathogenesis. The polypeptide is Ubiquitin-like modifier-activating enzyme atg7 (Botryotinia fuckeliana (strain T4) (Noble rot fungus)).